The primary structure comprises 307 residues: Acetaldehyde dehydrogenase (307 aa).

Cys131 serves as the catalytic Acyl-thioester intermediate. Residues 162-170 (SIGPGTRKN) and Asn273 each bind NAD(+).

It belongs to the acetaldehyde dehydrogenase family.

The catalysed reaction is acetaldehyde + NAD(+) + CoA = acetyl-CoA + NADH + H(+). The sequence is that of Acetaldehyde dehydrogenase (nahO) from Stutzerimonas stutzeri (Pseudomonas stutzeri).